A 245-amino-acid polypeptide reads, in one-letter code: 8-amino-3,8-dideoxy-manno-octulosonate cytidylyltransferase (245 aa).

The protein belongs to the KdsB family.

It is found in the cytoplasm. It carries out the reaction 8-amino-3,8-dideoxy-alpha-D-manno-octulosonate + CTP = CMP-8-amino-3,8-dideoxy-alpha-D-manno-oct-2-ulosonate + diphosphate. It functions in the pathway bacterial outer membrane biogenesis; lipopolysaccharide biosynthesis. In terms of biological role, activates KDO8N (a required 8-carbon sugar) for incorporation into bacterial lipopolysaccharide in the Shewanella genus. This Shewanella baltica (strain OS223) protein is 8-amino-3,8-dideoxy-manno-octulosonate cytidylyltransferase.